The following is a 258-amino-acid chain: Isoprenyl transferase 1 (258 aa).

D39 is a catalytic residue. D39 lines the Mg(2+) pocket. Substrate-binding positions include 40–43, W44, R52, H57, and 85–87; these read GNRR and SND. The active-site Proton acceptor is the N88. Substrate contacts are provided by residues R92, R207, and 213–215; that span reads RLS. E226 is a binding site for Mg(2+).

It belongs to the UPP synthase family. Homodimer. It depends on Mg(2+) as a cofactor.

Functionally, catalyzes the condensation of isopentenyl diphosphate (IPP) with allylic pyrophosphates generating different type of terpenoids. In Tropheryma whipplei (strain TW08/27) (Whipple's bacillus), this protein is Isoprenyl transferase 1.